A 302-amino-acid chain; its full sequence is Short-chain dehydrogenase/reductase 1 (302 aa).

Residues 20 to 23, arginine 43, 71 to 72, and asparagine 98 each bind NADP(+); these read NKGL and DV. Serine 170 lines the substrate pocket. NADP(+)-binding positions include tyrosine 226, lysine 230, and 257 to 262; that span reads VKTDIN. Residue tyrosine 226 is the Proton acceptor of the active site.

The protein belongs to the short-chain dehydrogenases/reductases (SDR) family. In terms of tissue distribution, mainly expressed in flowers and flower buds, to a lesser extent in leaves and, at low levels, in stems and roots.

Its pathway is secondary metabolite biosynthesis; terpenoid biosynthesis. In terms of biological role, component of the oleanane-type triterpene saponins (e.g. saponarioside A and saponarioside B) biosynthetic pathway, leading to the production of natural products with detergent properties used as traditional sources of soap. A dehydrogenase/reductase that, together with UGT74CD1, mediates the conversion of QA-tri to QA-triF; UGT74CD1 may transfer 4-keto-6-deoxy-glucose to QA-tri, which is in turn reduced to D-fucose by SDR1, thus leading to QA-triF formation via the initiation of the C-28 sugar chain. This chain is Short-chain dehydrogenase/reductase 1, found in Saponaria officinalis (Common soapwort).